The following is a 158-amino-acid chain: Phosphopantetheine adenylyltransferase (158 aa).

Belongs to the eukaryotic CoaD family.

The protein localises to the cytoplasm. The enzyme catalyses (R)-4'-phosphopantetheine + ATP + H(+) = 3'-dephospho-CoA + diphosphate. Its pathway is cofactor biosynthesis; coenzyme A biosynthesis. Functionally, reversibly transfers an adenylyl group from ATP to 4'-phosphopantetheine, yielding dephospho-CoA (dPCoA) and pyrophosphate. The chain is Phosphopantetheine adenylyltransferase from Pyrococcus horikoshii (strain ATCC 700860 / DSM 12428 / JCM 9974 / NBRC 100139 / OT-3).